The sequence spans 494 residues: Glutamyl-tRNA(Gln) amidotransferase subunit A (494 aa).

Residues Lys78 and Ser158 each act as charge relay system in the active site. Ser182 (acyl-ester intermediate) is an active-site residue.

This sequence belongs to the amidase family. GatA subfamily. In terms of assembly, heterotrimer of A, B and C subunits.

The enzyme catalyses L-glutamyl-tRNA(Gln) + L-glutamine + ATP + H2O = L-glutaminyl-tRNA(Gln) + L-glutamate + ADP + phosphate + H(+). Its function is as follows. Allows the formation of correctly charged Gln-tRNA(Gln) through the transamidation of misacylated Glu-tRNA(Gln) in organisms which lack glutaminyl-tRNA synthetase. The reaction takes place in the presence of glutamine and ATP through an activated gamma-phospho-Glu-tRNA(Gln). This chain is Glutamyl-tRNA(Gln) amidotransferase subunit A, found in Jannaschia sp. (strain CCS1).